The sequence spans 306 residues: Dirigent protein 24 (306 aa).

Residues 1-21 (MAKALSLTIFLFLLIASNVQS) form the signal peptide. The interval 36–61 (PQVPEEEDDSPQAVTTTPTPIPLPGP) is disordered.

It belongs to the plant dirigent protein family. Homodimer.

Its subcellular location is the secreted. The protein resides in the extracellular space. It localises to the apoplast. In terms of biological role, dirigent proteins impart stereoselectivity on the phenoxy radical-coupling reaction, yielding optically active lignans from two molecules of coniferyl alcohol in the biosynthesis of lignans, flavonolignans, and alkaloids and thus plays a central role in plant secondary metabolism. The protein is Dirigent protein 24 (DIR24) of Arabidopsis thaliana (Mouse-ear cress).